We begin with the raw amino-acid sequence, 208 residues long: N-(5'-phosphoribosyl)anthranilate isomerase (208 aa).

It belongs to the TrpF family.

It carries out the reaction N-(5-phospho-beta-D-ribosyl)anthranilate = 1-(2-carboxyphenylamino)-1-deoxy-D-ribulose 5-phosphate. It participates in amino-acid biosynthesis; L-tryptophan biosynthesis; L-tryptophan from chorismate: step 3/5. In Deinococcus radiodurans (strain ATCC 13939 / DSM 20539 / JCM 16871 / CCUG 27074 / LMG 4051 / NBRC 15346 / NCIMB 9279 / VKM B-1422 / R1), this protein is N-(5'-phosphoribosyl)anthranilate isomerase.